Consider the following 770-residue polypeptide: DNA topoisomerase 1 (770 aa).

Residues 4 to 140 (FRIIIAEKAD…EIRRAKFSAL (137 aa)) enclose the Toprim domain. The Mg(2+) site is built by glutamate 10 and aspartate 109. In terms of domain architecture, Topo IA-type catalytic spans 156–563 (NYSLADAADA…ESKKMLHEVL (408 aa)). The interaction with DNA stretch occupies residues 194 to 199 (SAGRVQ). Tyrosine 312 acts as the O-(5'-phospho-DNA)-tyrosine intermediate in catalysis. 3 C4-type zinc fingers span residues 611-638 (CEDP…CPVC), 673-700 (CPAD…YPKC), and 719-744 (CPYC…NMQC).

The protein belongs to the type IA topoisomerase family. In terms of assembly, monomer. The cofactor is Mg(2+).

The catalysed reaction is ATP-independent breakage of single-stranded DNA, followed by passage and rejoining.. Its function is as follows. Releases the supercoiling and torsional tension of DNA, which is introduced during the DNA replication and transcription, by transiently cleaving and rejoining one strand of the DNA duplex. Introduces a single-strand break via transesterification at a target site in duplex DNA. The scissile phosphodiester is attacked by the catalytic tyrosine of the enzyme, resulting in the formation of a DNA-(5'-phosphotyrosyl)-enzyme intermediate and the expulsion of a 3'-OH DNA strand. The free DNA strand then undergoes passage around the unbroken strand, thus removing DNA supercoils. Finally, in the religation step, the DNA 3'-OH attacks the covalent intermediate to expel the active-site tyrosine and restore the DNA phosphodiester backbone. The polypeptide is DNA topoisomerase 1 (Thermoplasma acidophilum (strain ATCC 25905 / DSM 1728 / JCM 9062 / NBRC 15155 / AMRC-C165)).